The following is a 207-amino-acid chain: MPKVGMEPIRRQQLIKATMAAIDEVGLAEATVMRIARHAGVSAGIISHYFGGKDGLLEATMRQILTDLSDAVAARRHALEDDSPRAHIGAIIEGNFDRTQVTGPAAKTWLAFWASSMHKPVLQRLQYVNDRRLYANLCHQFQRVMPKADARNAARGLAAMIDGLWLRGALTPEGLDAAEARYLAHTYLDQLLTHYGCYQDASTADFK.

In terms of domain architecture, HTH tetR-type spans 8–68 (PIRRQQLIKA…ATMRQILTDL (61 aa)). A DNA-binding region (H-T-H motif) is located at residues 31 to 50 (TVMRIARHAGVSAGIISHYF).

It participates in amine and polyamine biosynthesis; betaine biosynthesis via choline pathway [regulation]. In terms of biological role, repressor involved in the biosynthesis of the osmoprotectant glycine betaine. It represses transcription of the choline transporter BetT and the genes of BetAB involved in the synthesis of glycine betaine. This Chromohalobacter salexigens (strain ATCC BAA-138 / DSM 3043 / CIP 106854 / NCIMB 13768 / 1H11) protein is HTH-type transcriptional regulator BetI 2.